A 447-amino-acid chain; its full sequence is C4-dicarboxylate transport protein (447 aa).

Transmembrane regions (helical) follow at residues 19–39 (ILYVQVLVAIVAGVLLGHFYP), 55–75 (LVKMIIAPVIFLTVVTGIAGL), 90–110 (IYFLSFSTLALIIGMIVANVV), 155–175 (AFASGDILQVLFFAVLFGIAL), 199–219 (LVAIVMKAAPLGAFGAMAFTI), 232–252 (MLVGTFYLTSGLFVFVVLGLV), 343–363 (LLLVAMLSSKGAAGITGAGFI), and 366–386 (AATLSVVPSVPVAGMALILGV).

It belongs to the dicarboxylate/amino acid:cation symporter (DAACS) (TC 2.A.23) family.

Its subcellular location is the cell inner membrane. Its function is as follows. Responsible for the transport of dicarboxylates such as succinate, fumarate, and malate from the periplasm across the membrane. In Rhodospirillum rubrum (strain ATCC 11170 / ATH 1.1.1 / DSM 467 / LMG 4362 / NCIMB 8255 / S1), this protein is C4-dicarboxylate transport protein.